Consider the following 212-residue polypeptide: Guanylate kinase (212 aa).

The Guanylate kinase-like domain occupies 14–192; it reads GTALVICAPS…AYDELRATYL (179 aa). Residue 21–28 participates in ATP binding; that stretch reads APSGTGKT.

The protein belongs to the guanylate kinase family.

The protein localises to the cytoplasm. It catalyses the reaction GMP + ATP = GDP + ADP. Essential for recycling GMP and indirectly, cGMP. In Lawsonia intracellularis (strain PHE/MN1-00), this protein is Guanylate kinase.